A 403-amino-acid chain; its full sequence is Large ribosomal subunit protein uL3 (403 aa).

Residues 1 to 37 are disordered; that stretch reads MSHRKFSAPRHGSLGFLPRKRSSRHRGKVKSFPKDDP. Ser-13 carries the post-translational modification Phosphoserine. A compositionally biased stretch (basic residues) spans 18-31; the sequence is PRKRSSRHRGKVKS. Lys-39 participates in a covalent cross-link: Glycyl lysine isopeptide (Lys-Gly) (interchain with G-Cter in SUMO2). Position 136 is an N6-acetyllysine (Lys-136). Residues Lys-224 and Lys-226 each participate in a glycyl lysine isopeptide (Lys-Gly) (interchain with G-Cter in SUMO2) cross-link. His-245 bears the Tele-methylhistidine mark. Residues Lys-286 and Lys-294 each carry the N6-acetyllysine; alternate modification. Lys-286 participates in a covalent cross-link: Glycyl lysine isopeptide (Lys-Gly) (interchain with G-Cter in SUMO2); alternate. Lys-294 participates in a covalent cross-link: Glycyl lysine isopeptide (Lys-Gly) (interchain with G-Cter in SUMO1); alternate. The residue at position 304 (Ser-304) is a Phosphoserine. N6-acetyllysine; alternate is present on Lys-366. A Glycyl lysine isopeptide (Lys-Gly) (interchain with G-Cter in SUMO2); alternate cross-link involves residue Lys-366. Lys-373 carries the N6-acetyllysine modification. Residues Lys-386, Lys-393, and Lys-399 each participate in a glycyl lysine isopeptide (Lys-Gly) (interchain with G-Cter in SUMO2) cross-link.

The protein belongs to the universal ribosomal protein uL3 family. In terms of assembly, component of the large ribosomal subunit. Interacts with DHX33. Constitutively monomethylated at His-245 by METTL18. Methylation at His-245 regulates translation elongation by slowing ribosome traversal on tyrosine codons: slower elongation provides enough time for proper folding of synthesized proteins and prevents cellular aggregation of tyrosine-rich proteins. It is not required for incorporation of RPL3 into ribosomes.

The protein localises to the nucleus. It localises to the nucleolus. It is found in the cytoplasm. Functionally, component of the large ribosomal subunit. The ribosome is a large ribonucleoprotein complex responsible for the synthesis of proteins in the cell. In Oryctolagus cuniculus (Rabbit), this protein is Large ribosomal subunit protein uL3 (RPL3).